The primary structure comprises 612 residues: Alpha-glycerophosphate oxidase (612 aa).

Residue D21 to E49 coordinates FAD. A compositionally biased stretch (basic and acidic residues) spans V398–D408. The disordered stretch occupies residues V398–F418.

It belongs to the FAD-dependent glycerol-3-phosphate dehydrogenase family. The cofactor is FAD.

Its subcellular location is the cytoplasm. It catalyses the reaction sn-glycerol 3-phosphate + O2 = dihydroxyacetone phosphate + H2O2. The protein is Alpha-glycerophosphate oxidase (glpO) of Streptococcus pyogenes serotype M3 (strain ATCC BAA-595 / MGAS315).